The following is a 250-amino-acid chain: 3-deoxy-manno-octulosonate cytidylyltransferase (250 aa).

This sequence belongs to the KdsB family.

It localises to the cytoplasm. It carries out the reaction 3-deoxy-alpha-D-manno-oct-2-ulosonate + CTP = CMP-3-deoxy-beta-D-manno-octulosonate + diphosphate. It participates in nucleotide-sugar biosynthesis; CMP-3-deoxy-D-manno-octulosonate biosynthesis; CMP-3-deoxy-D-manno-octulosonate from 3-deoxy-D-manno-octulosonate and CTP: step 1/1. Its pathway is bacterial outer membrane biogenesis; lipopolysaccharide biosynthesis. Functionally, activates KDO (a required 8-carbon sugar) for incorporation into bacterial lipopolysaccharide in Gram-negative bacteria. The polypeptide is 3-deoxy-manno-octulosonate cytidylyltransferase (Francisella tularensis subsp. tularensis (strain FSC 198)).